The chain runs to 332 residues: Glycerol-3-phosphate dehydrogenase [NAD(P)+] (332 aa).

5 residues coordinate NADPH: serine 11, tryptophan 12, arginine 32, arginine 33, and lysine 106. Residues lysine 106 and glycine 136 each coordinate sn-glycerol 3-phosphate. Residue alanine 140 participates in NADPH binding. Sn-glycerol 3-phosphate-binding residues include lysine 191, aspartate 244, serine 254, arginine 255, and asparagine 256. The Proton acceptor role is filled by lysine 191. Arginine 255 lines the NADPH pocket. NADPH is bound by residues valine 280 and glutamate 282.

The protein belongs to the NAD-dependent glycerol-3-phosphate dehydrogenase family.

The protein resides in the cytoplasm. It catalyses the reaction sn-glycerol 3-phosphate + NAD(+) = dihydroxyacetone phosphate + NADH + H(+). It carries out the reaction sn-glycerol 3-phosphate + NADP(+) = dihydroxyacetone phosphate + NADPH + H(+). Its pathway is membrane lipid metabolism; glycerophospholipid metabolism. Functionally, catalyzes the reduction of the glycolytic intermediate dihydroxyacetone phosphate (DHAP) to sn-glycerol 3-phosphate (G3P), the key precursor for phospholipid synthesis. This is Glycerol-3-phosphate dehydrogenase [NAD(P)+] from Corynebacterium kroppenstedtii (strain DSM 44385 / JCM 11950 / CIP 105744 / CCUG 35717).